A 560-amino-acid chain; its full sequence is Nuclear receptor subfamily 5 group A member 2 (560 aa).

Residues 17-54 are disordered; that stretch reads GLPAIAPAPGSETPHSPKLEEKHREKRAGLPDRHRRPI. Basic and acidic residues predominate over residues 31 to 48; the sequence is HSPKLEEKHREKRAGLPD. Residues 104 to 179 constitute a DNA-binding region (nuclear receptor); the sequence is EELCPVCGDK…VGMKLEAVRA (76 aa). Residues cysteine 107, cysteine 110, cysteine 124, cysteine 127, cysteine 143, cysteine 149, cysteine 159, and cysteine 162 each contribute to the Zn(2+) site. 2 NR C4-type zinc fingers span residues 107 to 127 and 143 to 162; these read CPVCGDKVSGYHYGLLTCESC and CIENQNCQIDKTQRKRCPYC. Residues 173–188 form a C-terminal extension (CTE) region; that stretch reads KLEAVRADRMRGGRNK. An FTZ-F1 box motif is present at residues 189-208; that stretch reads FGPMYKRDRALKQQKKALIR. A Glycyl lysine isopeptide (Lys-Gly) (interchain with G-Cter in SUMO1) cross-link involves residue lysine 289. Residues 319-558 enclose the NR LBD domain; it reads SIPHLILELL…NLLIEMLHAK (240 aa). A phospholipid derivative contacts are provided by tyrosine 535 and lysine 539. Residues 547–558 form an AF-2 region; sequence YNNLLIEMLHAK.

This sequence belongs to the nuclear hormone receptor family. NR5 subfamily. Monomer; Binds DNA as a monomer. Interacts with nuclear receptor corepressors NR0B1 and NR0B2; repressing NR5A2 nuclear receptor activity. Interacts with nuclear receptor coactivators CTNNB1, PPARGC1A and NCOA2; interaction takes place following ligand-binding and promotes target gene activation. Interacts (when sumoylated) with GPS2; interaction with GPS2 onto hepatic acute phase protein promoters prevents N-Cor corepressor complex dissociation. Interacts with HNF1A. Interacts with GRIP1. In terms of processing, sumoylated by SUMO1 at Lys-289 during the hepatic acute phase response, leading to promote interaction with GPS2 and prevent N-Cor corepressor complex dissociation.

The protein resides in the nucleus. It is found in the chromosome. Functionally, orphan nuclear receptor that binds DNA as a monomer to the 5'-TCAAGGCCA-3' sequence and controls expression of target genes: regulates key biological processes, such as early embryonic development, cholesterol and bile acid synthesis pathways, as well as liver and pancreas morphogenesis. Ligand-binding causes conformational change which causes recruitment of coactivators, promoting target gene activation. The specific ligand is unknown, but specific phospholipids, such as phosphatidylethanolamine, phosphatidylserine, dilauroyl phosphatidylcholine and diundecanoyl phosphatidylcholine can act as ligand in vitro. Acts as a pioneer transcription factor, which unwraps target DNA from histones and elicits local opening of closed chromatin. Plays a central role during preimplantation stages of embryonic development. Plays a minor role in zygotic genome activation (ZGA) by regulating a small set of two-cell stage genes. Plays a major role in morula development (2-16 cells embryos) by acting as a master regulator at the 8-cell stage, controlling expression of lineage-specifying transcription factors and genes involved in mitosis, telomere maintenance and DNA repair. Zygotic NR5A2 binds to both closed and open chromatin with other transcription factors, often at SINE B1/Alu repeats DNA elements, promoting chromatin accessibility at nearby regulatory regions. Also involved in the epiblast stage of development and embryonic stem cell pluripotency, by promoting expression of POU5F1/OCT4. Regulates other processes later in development, such as formation of connective tissue in lower jaw and middle ear, neural stem cell differentiation, ovarian follicle development and Sertoli cell differentiation. Involved in exocrine pancreas development and acinar cell differentiation. Acts as an essential transcriptional regulator of lipid metabolism. Key regulator of cholesterol 7-alpha-hydroxylase gene (CYP7A) expression in liver. Also acts as a negative regulator of inflammation in different organs, such as, liver and pancreas. Protects against intestinal inflammation via its ability to regulate glucocorticoid production. Plays an anti-inflammatory role during the hepatic acute phase response by acting as a corepressor: inhibits the hepatic acute phase response by preventing dissociation of the N-Cor corepressor complex. Acts as a regulator of immunity by promoting lymphocyte T-cell development, proliferation and effector functions. Also involved in resolution of endoplasmic reticulum stress in the liver. The chain is Nuclear receptor subfamily 5 group A member 2 from Rattus norvegicus (Rat).